Reading from the N-terminus, the 571-residue chain is Proline--tRNA ligase (571 aa).

It belongs to the class-II aminoacyl-tRNA synthetase family. ProS type 1 subfamily. In terms of assembly, homodimer.

Its subcellular location is the cytoplasm. It catalyses the reaction tRNA(Pro) + L-proline + ATP = L-prolyl-tRNA(Pro) + AMP + diphosphate. Its function is as follows. Catalyzes the attachment of proline to tRNA(Pro) in a two-step reaction: proline is first activated by ATP to form Pro-AMP and then transferred to the acceptor end of tRNA(Pro). As ProRS can inadvertently accommodate and process non-cognate amino acids such as alanine and cysteine, to avoid such errors it has two additional distinct editing activities against alanine. One activity is designated as 'pretransfer' editing and involves the tRNA(Pro)-independent hydrolysis of activated Ala-AMP. The other activity is designated 'posttransfer' editing and involves deacylation of mischarged Ala-tRNA(Pro). The misacylated Cys-tRNA(Pro) is not edited by ProRS. The protein is Proline--tRNA ligase of Vibrio vulnificus (strain CMCP6).